Reading from the N-terminus, the 319-residue chain is 4-hydroxy-3-methylbut-2-enyl diphosphate reductase (319 aa).

[4Fe-4S] cluster is bound at residue Cys-12. Positions 41 and 74 each coordinate (2E)-4-hydroxy-3-methylbut-2-enyl diphosphate. The dimethylallyl diphosphate site is built by His-41 and His-74. Positions 41 and 74 each coordinate isopentenyl diphosphate. Residue Cys-97 participates in [4Fe-4S] cluster binding. Residue His-125 coordinates (2E)-4-hydroxy-3-methylbut-2-enyl diphosphate. His-125 contacts dimethylallyl diphosphate. His-125 lines the isopentenyl diphosphate pocket. Residue Glu-127 is the Proton donor of the active site. Thr-168 serves as a coordination point for (2E)-4-hydroxy-3-methylbut-2-enyl diphosphate. Residue Cys-198 coordinates [4Fe-4S] cluster. Positions 226, 227, 228, and 270 each coordinate (2E)-4-hydroxy-3-methylbut-2-enyl diphosphate. 4 residues coordinate dimethylallyl diphosphate: Ser-226, Ser-227, Asn-228, and Ser-270. 4 residues coordinate isopentenyl diphosphate: Ser-226, Ser-227, Asn-228, and Ser-270.

It belongs to the IspH family. In terms of assembly, homodimer. [4Fe-4S] cluster serves as cofactor.

The catalysed reaction is isopentenyl diphosphate + 2 oxidized [2Fe-2S]-[ferredoxin] + H2O = (2E)-4-hydroxy-3-methylbut-2-enyl diphosphate + 2 reduced [2Fe-2S]-[ferredoxin] + 2 H(+). The enzyme catalyses dimethylallyl diphosphate + 2 oxidized [2Fe-2S]-[ferredoxin] + H2O = (2E)-4-hydroxy-3-methylbut-2-enyl diphosphate + 2 reduced [2Fe-2S]-[ferredoxin] + 2 H(+). Its pathway is isoprenoid biosynthesis; dimethylallyl diphosphate biosynthesis; dimethylallyl diphosphate from (2E)-4-hydroxy-3-methylbutenyl diphosphate: step 1/1. It functions in the pathway isoprenoid biosynthesis; isopentenyl diphosphate biosynthesis via DXP pathway; isopentenyl diphosphate from 1-deoxy-D-xylulose 5-phosphate: step 6/6. Catalyzes the conversion of 1-hydroxy-2-methyl-2-(E)-butenyl 4-diphosphate (HMBPP) into a mixture of isopentenyl diphosphate (IPP) and dimethylallyl diphosphate (DMAPP). Acts in the terminal step of the DOXP/MEP pathway for isoprenoid precursor biosynthesis. This Hamiltonella defensa subsp. Acyrthosiphon pisum (strain 5AT) protein is 4-hydroxy-3-methylbut-2-enyl diphosphate reductase.